A 98-amino-acid polypeptide reads, in one-letter code: Large ribosomal subunit protein uL23 (98 aa).

Belongs to the universal ribosomal protein uL23 family. In terms of assembly, part of the 50S ribosomal subunit. Contacts protein L29, and trigger factor when it is bound to the ribosome.

In terms of biological role, one of the early assembly proteins it binds 23S rRNA. One of the proteins that surrounds the polypeptide exit tunnel on the outside of the ribosome. Forms the main docking site for trigger factor binding to the ribosome. The chain is Large ribosomal subunit protein uL23 from Frankia alni (strain DSM 45986 / CECT 9034 / ACN14a).